Reading from the N-terminus, the 104-residue chain is MMSNERTLLNQLIKSKTDTVGSEILKEIEGNDEYIKDVQLKKLKELHDKKFKEKGVTPLIRLYEKYNACALNDGDLQNWAELIDRDIRILEGTIKILEDESNEG.

This sequence belongs to the BLOC1S1 family. In terms of assembly, component of the biogenesis of lysosome-related organelles complex-1 (BLOC-1).

The protein localises to the endosome. In terms of biological role, component of the biogenesis of lysosome-related organelles complex-1 (BLOC-1), a complex involved in endosomal cargo sorting. The polypeptide is Biogenesis of lysosome-related organelles complex 1 subunit BLS1 (BLS1) (Kluyveromyces lactis (strain ATCC 8585 / CBS 2359 / DSM 70799 / NBRC 1267 / NRRL Y-1140 / WM37) (Yeast)).